We begin with the raw amino-acid sequence, 226 residues long: Transmembrane gamma-carboxyglutamic acid protein 4 (226 aa).

Positions 1–17 (MFTLLVLLSQLPTVTLG) are cleaved as a signal peptide. The propeptide occupies 18 to 49 (FPHCARGPKASKHAGEEVFTSKEEANFFIHRR). Residues 50–113 (LLYNRFDLEL…KSDGNREKID (64 aa)) lie on the Extracellular side of the membrane. The 47-residue stretch at 52–98 (YNRFDLELFTPGNLERECNEELCNYEEAREIFVDEDKTIAFWQEYSA) folds into the Gla domain. A disulfide bridge connects residues C69 and C74. 4-carboxyglutamate is present on E72. Residues 114-134 (VMGLLTGLIAAGVFLVIFGLL) traverse the membrane as a helical segment. The Cytoplasmic segment spans residues 135–226 (GYYLCITKCN…FKKSMSLPSH (92 aa)). S163 carries the phosphoserine modification. An LPXY motif; mediates binding to WW domain-containing proteins motif is present at residues 186–189 (LPSY). The PPXY motif; mediates binding to WW domain-containing proteins motif lies at 204–207 (PPPY).

Belongs to the commissureless family. Interacts (via cytoplasmic domain) with WW domain-containing proteins MAGI1, MAGI3, NEDD4, NEDD4L, WWTR1/TAZ and YAP1. Gamma-carboxyglutamate residues are formed by vitamin K dependent carboxylation. These residues are essential for the binding of calcium. As to expression, widely expressed with highest levels in kidney.

It localises to the endoplasmic reticulum-Golgi intermediate compartment membrane. The protein resides in the cell membrane. Functionally, may control axon guidance across the CNS. Prevents the delivery of ROBO1 at the cell surface and down-regulates its expression. The protein is Transmembrane gamma-carboxyglutamic acid protein 4 of Homo sapiens (Human).